The sequence spans 559 residues: Intestinal-type alkaline phosphatase (559 aa).

Positions 1 to 19 (MQGPWVLLLLGLRLQLSLS) are cleaved as a signal peptide. Residue D61 coordinates Mg(2+). Zn(2+) is bound by residues D61 and S111. The active-site Phosphoserine intermediate is the S111. A disulfide bond links C140 and C202. A glycan (N-linked (GlcNAc...) asparagine) is linked at N141. S174 serves as a coordination point for Mg(2+). Residue E235 participates in Ca(2+) binding. The N-linked (GlcNAc...) asparagine glycan is linked to N241. Ca(2+) contacts are provided by F288, E289, and D304. E330 contacts Mg(2+). Positions 335, 339, 376, and 377 each coordinate Zn(2+). N426 is a glycosylation site (N-linked (GlcNAc...) asparagine). Zn(2+) is bound at residue H450. C485 and C492 are disulfide-bonded. Positions 496–531 (PPADESQTTTTTRQTTITTTTTTTTTTTTPVHNSAR) are disordered. Over residues 503–524 (TTTTTRQTTITTTTTTTTTTTT) the composition is skewed to low complexity. A lipid anchor (GPI-anchor amidated asparagine) is attached at N528. Positions 529 to 559 (SARSLGPATAPLALALLAGMLMLLLGAPAES) are cleaved as a propeptide — removed in mature form.

It belongs to the alkaline phosphatase family. As to quaternary structure, homodimer. Mg(2+) is required as a cofactor. The cofactor is Zn(2+). Requires Ca(2+) as cofactor. Intestine and thymus.

The protein localises to the cell membrane. The catalysed reaction is a phosphate monoester + H2O = an alcohol + phosphate. Alkaline phosphatase that can hydrolyze various phosphate compounds. This chain is Intestinal-type alkaline phosphatase (Iap), found in Mus musculus (Mouse).